We begin with the raw amino-acid sequence, 401 residues long: LysM domain-containing GPI-anchored protein LYP4 (401 aa).

A signal peptide spans 1-23 (MPPPLLLLLLLAAAAAAVAPARS). 4 disulfide bridges follow: cysteine 30/cysteine 96, cysteine 36/cysteine 162, cysteine 94/cysteine 160, and cysteine 96/cysteine 162. 2 LysM domains span residues 106-156 (VRYV…TLFV) and 175-218 (LTYV…IIVV). Intrachain disulfides connect cysteine 223–cysteine 255 and cysteine 250–cysteine 279. An N-linked (GlcNAc...) asparagine glycan is attached at asparagine 240. Residues asparagine 281, asparagine 288, and asparagine 310 are each glycosylated (N-linked (GlcNAc...) asparagine). Serine 373 is lipidated: GPI-anchor amidated serine. Residues 374–401 (SGPPPAGRHVVGDVLGAFALCLVGNLLW) constitute a propeptide, removed in mature form.

As to quaternary structure, interacts with LYP6. Interacts with CEBIP. Interacts with CERK1. Expressed in roots and leaves.

It localises to the cell membrane. In terms of biological role, functions in innate immunity. Functions as a pattern recognition receptor (PRR), sensing bacterial peptidoglycan (PGN) and fungal chitin at the cell surface. Involved in resistance against the bacterial pathogen Xanthomonas oryzae pv. oryzae (Xoo) and the fungal pathogen Magnaporthe oryzae. Binds PGN and fungal chitin in vitro. Involved in microbe-associated molecular patterns (MAMPs) perception and participates in the activation of defense genes against the bacterial pathogen Xanthomonas oryzae pv. oryzicola (Xoc) or the fungal pathogen Magnaporthe oryzae. This Oryza sativa subsp. japonica (Rice) protein is LysM domain-containing GPI-anchored protein LYP4.